A 254-amino-acid chain; its full sequence is SLA class II histocompatibility antigen, DQ haplotype C alpha chain (254 aa).

Residues 1 to 23 (MVPGRVLMWGALALTTVMSACGG) form the signal peptide. An alpha-1 region spans residues 24-120 (EDIAADHVAS…KVPEVTVFSK (97 aa)). Over 24–216 (EDIAADHVAS…IPAPMSELTE (193 aa)) the chain is Extracellular. Residues Asn104 and Asn144 are each glycosylated (N-linked (GlcNAc...) asparagine). The 92-residue stretch at 113–204 (PEVTVFSKSP…LDKPLLKHWE (92 aa)) folds into the Ig-like C1-type domain. The alpha-2 stretch occupies residues 121–203 (SPVILGQPNT…GLDKPLLKHW (83 aa)). Residues Cys133 and Cys188 are joined by a disulfide bond. The connecting peptide stretch occupies residues 204 to 216 (EPEIPAPMSELTE). Residues 217-239 (TVVCALGLIVGLVGIVVGTVFII) form a helical membrane-spanning segment. Residues 240-254 (QGLRSGGPSRHQGSL) are Cytoplasmic-facing.

Belongs to the MHC class II family.

It is found in the membrane. In Sus scrofa (Pig), this protein is SLA class II histocompatibility antigen, DQ haplotype C alpha chain.